The primary structure comprises 465 residues: Phosphatidylserine synthase 1 (465 aa).

The Cytoplasmic portion of the chain corresponds to M1–Q35. The chain crosses the membrane as a helical span at residues F36 to F56. The Lumenal portion of the chain corresponds to A57 to R70. The helical transmembrane segment at V71–G91 threads the bilayer. Topologically, residues P92 to R102 are cytoplasmic. The chain crosses the membrane as a helical span at residues I103 to W123. The Lumenal segment spans residues D124–R286. The helical transmembrane segment at V287–L307 threads the bilayer. Residues K308–H309 lie on the Cytoplasmic side of the membrane. A helical membrane pass occupies residues I310 to I330. At T331 to W355 the chain is on the lumenal side. The helical transmembrane segment at V356 to F376 threads the bilayer. Topologically, residues S377–Q380 are cytoplasmic. Residues I381 to V401 traverse the membrane as a helical segment. The Lumenal portion of the chain corresponds to M402–K465. Residues C446 to K465 are disordered.

This sequence belongs to the phosphatidyl serine synthase family.

The protein resides in the endoplasmic reticulum membrane. The catalysed reaction is a 1,2-diacyl-sn-glycero-3-phosphoethanolamine + L-serine = a 1,2-diacyl-sn-glycero-3-phospho-L-serine + ethanolamine. It carries out the reaction a 1,2-diacyl-sn-glycero-3-phosphocholine + L-serine = a 1,2-diacyl-sn-glycero-3-phospho-L-serine + choline. It participates in phospholipid metabolism; phosphatidylserine biosynthesis. In terms of biological role, catalyzes a base-exchange reaction in which the polar head group of phosphatidylethanolamine (PE) or phosphatidylcholine (PC) is replaced by L-serine. Catalyzes mainly the conversion of phosphatidylcholine but also converts, in vitro and to a lesser extent, phosphatidylethanolamine. This is Phosphatidylserine synthase 1 (ptdss1) from Danio rerio (Zebrafish).